We begin with the raw amino-acid sequence, 240 residues long: Fatty acid metabolism regulator protein (240 aa).

Residues 6–74 form the HTH gntR-type domain; sequence KGPASFAEKY…HGKPTRVNNF (69 aa). The segment at residues 34–53 is a DNA-binding region (H-T-H motif); the sequence is ERELSELIGVTRTTLREVLQ.

As to quaternary structure, homodimer.

The protein localises to the cytoplasm. Functionally, multifunctional regulator of fatty acid metabolism. This chain is Fatty acid metabolism regulator protein, found in Shewanella oneidensis (strain ATCC 700550 / JCM 31522 / CIP 106686 / LMG 19005 / NCIMB 14063 / MR-1).